We begin with the raw amino-acid sequence, 101 residues long: Large ribosomal subunit protein uL24 (101 aa).

Belongs to the universal ribosomal protein uL24 family. Part of the 50S ribosomal subunit.

Functionally, one of two assembly initiator proteins, it binds directly to the 5'-end of the 23S rRNA, where it nucleates assembly of the 50S subunit. Its function is as follows. One of the proteins that surrounds the polypeptide exit tunnel on the outside of the subunit. In Jannaschia sp. (strain CCS1), this protein is Large ribosomal subunit protein uL24.